The primary structure comprises 236 residues: tRNA1(Val) (adenine(37)-N6)-methyltransferase (236 aa).

Belongs to the methyltransferase superfamily. tRNA (adenine-N(6)-)-methyltransferase family.

It localises to the cytoplasm. The catalysed reaction is adenosine(37) in tRNA1(Val) + S-adenosyl-L-methionine = N(6)-methyladenosine(37) in tRNA1(Val) + S-adenosyl-L-homocysteine + H(+). Functionally, specifically methylates the adenine in position 37 of tRNA(1)(Val) (anticodon cmo5UAC). This chain is tRNA1(Val) (adenine(37)-N6)-methyltransferase, found in Actinobacillus pleuropneumoniae serotype 7 (strain AP76).